A 529-amino-acid chain; its full sequence is MKAAIIDGYVDEPSCLGVPPYVAPYPRYIYGMLKSLDYEATYFTIDHLRAHPETVERLKKFDLAVIIAGIAVPGKYLGGKPLSKKELFSMGLAERNLLVGPITLELSQKELRMLEDVEIEVIDFPFERKLFERLGGEKFNLNAFAARGAEVVRQHPDFPHIICEIETYRGCYWGKCSFCIERVHSLWFRSPEDVLGEVKALYDCGVRHFRLGRQTDFFSYLGEFEGVPRPNPEAMKKFHRAIWDLCPKIKTLHIDNVNPKTIAEHPEESAELIKTIVMYQTPGNVAAMGLESADERVVRKNSLAASPEEVMFAIELINRYGRHPSYNGLPYFLPGINFVIGLKGETKETFELNYRFLEEVMERNLLLRRINIRQVKIFPGTPMEKEGDRRLKKHRKEFIAFKNRVRENIDTPMLKKILPKGRRITDLRVEVEGKISYARQLATYPILVGLVGKYPRNLYVDARVVDYGHRSVTAVEADLDVNKATLEQLEFLLGKVGREVYMRRPIGSDAELEAIGGKEALVYLKVGGE.

The Radical SAM core domain maps to 157–410 (DFPHIICEIE…FKNRVRENID (254 aa)). Residues C171, C176, and C179 each contribute to the [4Fe-4S] cluster site.

The cofactor is [4Fe-4S] cluster.

This is an uncharacterized protein from Archaeoglobus fulgidus (strain ATCC 49558 / DSM 4304 / JCM 9628 / NBRC 100126 / VC-16).